A 370-amino-acid polypeptide reads, in one-letter code: MHRLILVSILVCANFCCYRDTFATPQSASIKALRNANLRRDESNHLTDLYRRDENIRVTGTGHVQSPRFPNSYPRNLLLTWRLHSQEKTRIQLAFDHQFGLEEAENDICRYDFVEVEDVSESSTVVRGRWCGHKEIPPRITSRTNQIKITFQSDDYFVAKPGFKIYYSFVEDFQPEAASEINWESVTSSFSGVSYHSPSVMDSTLTADALDKAIAEFDTVEDLLKYFNPASWQDDLENLYMDTPRYRGRSYHERKSKVDLDRLNDDVKRYSCTPRNHSVNLREELKLTNAVFFPRCLLVQRCGGNCGCGTLNWKSCTCSSGKTVKKYHEVLKFEPGHFKRRGKAKNMALVDIQLDHHERCDCICSSRPPR.

The signal sequence occupies residues 1–23 (MHRLILVSILVCANFCCYRDTFA). One can recognise a CUB domain in the interval 52–170 (RDENIRVTGT…PGFKIYYSFV (119 aa)). Cys-109 and Cys-131 are disulfide-bonded. Asn-276 carries an N-linked (GlcNAc...) asparagine glycan. Intrachain disulfides connect Cys-302-Cys-360 and Cys-306-Cys-362.

It belongs to the PDGF/VEGF growth factor family. Homodimer; disulfide-linked. Interacts with PDGFRB homodimers, and with heterodimers formed by PDGFRA and PDGFRB. Post-translationally, activated by proteolytic cleavage. Proteolytic removal of the N-terminal CUB domain releasing the core domain is necessary for unmasking the receptor-binding epitopes of the core domain. Cleavage after Arg-247 or Arg-249 by urokinase plasminogen activator gives rise to the active form. As to expression, widely expressed. Expressed at high levels in the kidney, adrenal glands, eye and CNS. In the kidney the localization is confined to arterial and arteriolar vascular smooth muscle cells and is also detected at low levels in the glomeruli In the eye in the anterior segment it is localized to the iris and ciliary body. In the retina localizes intensely to the outer plexiform layer, which contains photoreceptor axons and the synaptic layer between photoreceptors and second order neurons. In the spinal cord, prominently expressed in the motorneurons.

Its subcellular location is the secreted. Its function is as follows. Growth factor that plays an essential role in the regulation of embryonic development, cell proliferation, cell migration, survival and chemotaxis. Potent mitogen for cells of mesenchymal origin. Plays an important role in wound healing. Induces macrophage recruitment, increased interstitial pressure, and blood vessel maturation during angiogenesis. May play an important role in control of lens epithelial cell proliferation. Can initiate events that lead to a mesangial proliferative glomerulonephritis, including influx of monocytes and macrophages and production of extracellular matrix. This chain is Platelet-derived growth factor D (Pdgfd), found in Rattus norvegicus (Rat).